Reading from the N-terminus, the 115-residue chain is Large ribosomal subunit protein bL19 (115 aa).

The protein belongs to the bacterial ribosomal protein bL19 family.

In terms of biological role, this protein is located at the 30S-50S ribosomal subunit interface and may play a role in the structure and function of the aminoacyl-tRNA binding site. The protein is Large ribosomal subunit protein bL19 of Streptococcus sanguinis (strain SK36).